The chain runs to 330 residues: Elongation factor Ts (330 aa).

The involved in Mg(2+) ion dislocation from EF-Tu stretch occupies residues 79-82 (TDFV).

It belongs to the EF-Ts family.

Its subcellular location is the cytoplasm. In terms of biological role, associates with the EF-Tu.GDP complex and induces the exchange of GDP to GTP. It remains bound to the aminoacyl-tRNA.EF-Tu.GTP complex up to the GTP hydrolysis stage on the ribosome. This Bacteroides thetaiotaomicron (strain ATCC 29148 / DSM 2079 / JCM 5827 / CCUG 10774 / NCTC 10582 / VPI-5482 / E50) protein is Elongation factor Ts.